The chain runs to 611 residues: L-tyrosine decarboxylase (611 aa).

Pyridoxal 5'-phosphate-binding positions include 151–152 (GS), threonine 292, and 382–384 (DPH). Position 385 is an N6-(pyridoxal phosphate)lysine (lysine 385). Tyrosine 413 functions as the Proton donor in the catalytic mechanism. Serine 433 is a binding site for pyridoxal 5'-phosphate.

This sequence belongs to the group II decarboxylase family. Tyrosine decarboxylase subfamily. As to quaternary structure, homodimer. Requires pyridoxal 5'-phosphate as cofactor.

The catalysed reaction is L-tyrosine + H(+) = tyramine + CO2. It catalyses the reaction L-dopa + H(+) = dopamine + CO2. Its pathway is amino-acid metabolism. Its activity is regulated as follows. Levodopa decarboxylation is not inhibited by carbidopa, benserazide, and methyldopa, that are three human L-dopa decarboxylase inhibitors. In terms of biological role, catalyzes the decarboxylation of L-tyrosine to produce tyramine. Plays a role in acid resistance since tyramine production via tyrosine decarboxylation appears to provide a cytosolic pH maintenance mechanism that helps the bacterium cope with acid stress such as that encountered in gastrointestinal tract (GIT) environments. Therefore, may contribute to the colonization of the human GIT by E.faecium. Functionally, also involved in drug metabolism, being able to catalyze decarboxylation of levodopa (L-dopa) to dopamine. In gut microbiota this enzyme is in fact exclusively responsible for the decarboxylation of levodopa, and thus reduces in situ levels of levodopa in the treatment of Parkinson's disease. It was shown that abundance of bacterial tyrosine decarboxylase in the proximal small intestine - the primary site of levodopa absorption - contributes to interindividual variation in drug efficacy and can explain the requirement for an increased dosage regimen of levodopa treatment in Parkinson's disease patients. This chain is L-tyrosine decarboxylase, found in Enterococcus faecium (Streptococcus faecium).